Consider the following 588-residue polypeptide: Phosphomethylpyrimidine synthase (588 aa).

Residues N212, M241, Y270, H306, S326–G328, D367–R370, and E406 contribute to the substrate site. H410 contacts Zn(2+). Y433 provides a ligand contact to substrate. H474 serves as a coordination point for Zn(2+). Residues C554, C557, and C562 each coordinate [4Fe-4S] cluster.

It belongs to the ThiC family. Homodimer. The cofactor is [4Fe-4S] cluster.

The enzyme catalyses 5-amino-1-(5-phospho-beta-D-ribosyl)imidazole + S-adenosyl-L-methionine = 4-amino-2-methyl-5-(phosphooxymethyl)pyrimidine + CO + 5'-deoxyadenosine + formate + L-methionine + 3 H(+). Its pathway is cofactor biosynthesis; thiamine diphosphate biosynthesis. Functionally, catalyzes the synthesis of the hydroxymethylpyrimidine phosphate (HMP-P) moiety of thiamine from aminoimidazole ribotide (AIR) in a radical S-adenosyl-L-methionine (SAM)-dependent reaction. The sequence is that of Phosphomethylpyrimidine synthase from Bartonella quintana (strain Toulouse) (Rochalimaea quintana).